The following is an 864-amino-acid chain: MDTCTRLLFAACATLSILHLVQSQNQQGFISLDCGLASNESPYNEANSNLTYISDADFIQGGKTGNVQKDLLMKLRKPYTVLRYFPDGIRNCYSLNVKQDTNYLIRVMFRYGNYDGLNNSPRFDLYLGPNIWTTIDMGKSGDGVLEEIIHITRSNILDICLVKTGTSTPMISSIELRPLLYDTYIAQTGSLRNYNRFYFTDSNNYIRYPQDVHDRIWVPLILPEWTHINTSHHVIDSIDGYDPPQDVLRTGAMPANASDPMTITWNLKTATDQVYGYIYIAEIMEVQANETREFEVVVNNKVHFDPFRPTRFEAQVMFNNVPLTCEGGFCRLQLIKTPKSTLPPLMNAFEIFTGIEFPQSETNQNDVIAVKNIQASYGLNRISWQGDPCVPKQFLWTGLSCNVIDVSTPPRIVKLDLSSSGLNGVIPPSIQNLTQLQELDLSQNNLTGKVPEFLAKMKYLLVINLSGNKLSGLVPQALLDRKKEGLKLLVDENMICVSCGTRFPTAAVAASVSAVAIIILVLVLIFVLRRRKPSAGKVTRSSFKSENRRFTYSDVNKMTNNFQVVIGKGGFGVVYQGCLNNEQAAIKVLSHSSAQGYKEFKTEVELLLRVHHEKLVSLIGYCDDDNGLALIYELMGKGNLKEHLSGKPGCSVLSWPIRLKIALESAIGIEYLHTGCKPKIVHRDVKSTNILLSEEFEAKIADFGLSRSFLIGNEAQPTVVAGTFGYLDPEYHKTSLLSMKSDVYSFGVVLLEIISGQDVIDLSRENCNIVEWTSFILENGDIESIVDPNLHQDYDTSSAWKVVELAMSCVNRTSKERPNMSQVVHVLNECLETCEKWRKSQEVDLSSPLELSIVVDTEINPKAR.

A signal peptide spans 1–23; the sequence is MDTCTRLLFAACATLSILHLVQS. The Extracellular segment spans residues 24-507; it reads QNQQGFISLD…SCGTRFPTAA (484 aa). N-linked (GlcNAc...) asparagine glycosylation is found at asparagine 49, asparagine 229, asparagine 256, asparagine 289, asparagine 432, asparagine 445, and asparagine 464. LRR repeat units follow at residues 411-434, 435-457, and 459-480; these read RIVKLDLSSSGLNGVIPPSIQNLT, QLQELDLSQNNLTGKVPEFLAKM, and YLLVINLSGNKLSGLVPQALLD. Residues 508-528 form a helical membrane-spanning segment; it reads VAASVSAVAIIILVLVLIFVL. Over 529 to 864 the chain is Cytoplasmic; it reads RRRKPSAGKV…VDTEINPKAR (336 aa). At threonine 551 the chain carries Phosphothreonine. One can recognise a Protein kinase domain in the interval 560-831; sequence NNFQVVIGKG…QVVHVLNECL (272 aa). Residues 566–574 and lysine 587 contribute to the ATP site; that span reads IGKGGFGVV. Tyrosine 632 bears the Phosphotyrosine mark. Residue aspartate 684 is the Proton acceptor of the active site. Phosphothreonine is present on residues threonine 718 and threonine 723. Tyrosine 731 is modified (phosphotyrosine).

The protein belongs to the protein kinase superfamily. Ser/Thr protein kinase family.

The protein resides in the membrane. It catalyses the reaction L-seryl-[protein] + ATP = O-phospho-L-seryl-[protein] + ADP + H(+). The enzyme catalyses L-threonyl-[protein] + ATP = O-phospho-L-threonyl-[protein] + ADP + H(+). This chain is Probable LRR receptor-like serine/threonine-protein kinase At1g07550, found in Arabidopsis thaliana (Mouse-ear cress).